Consider the following 352-residue polypeptide: Phosphoribosylformylglycinamidine cyclo-ligase (352 aa).

Belongs to the AIR synthase family.

It localises to the cytoplasm. It catalyses the reaction 2-formamido-N(1)-(5-O-phospho-beta-D-ribosyl)acetamidine + ATP = 5-amino-1-(5-phospho-beta-D-ribosyl)imidazole + ADP + phosphate + H(+). It participates in purine metabolism; IMP biosynthesis via de novo pathway; 5-amino-1-(5-phospho-D-ribosyl)imidazole from N(2)-formyl-N(1)-(5-phospho-D-ribosyl)glycinamide: step 2/2. This is Phosphoribosylformylglycinamidine cyclo-ligase from Pseudomonas fluorescens (strain Pf0-1).